A 202-amino-acid polypeptide reads, in one-letter code: Small ribosomal subunit protein uS5 (202 aa).

The 64-residue stretch at 46–109 folds into the S5 DRBM domain; that stretch reads LKSEVLSVGF…RRAKLNIVPV (64 aa).

It belongs to the universal ribosomal protein uS5 family. In terms of assembly, part of the 30S ribosomal subunit. Contacts protein S4.

In terms of biological role, with S4 and S12 plays an important role in translational accuracy. This Thermofilum pendens (strain DSM 2475 / Hrk 5) protein is Small ribosomal subunit protein uS5.